We begin with the raw amino-acid sequence, 461 residues long: Demethyllactenocin mycarosyltransferase (461 aa).

The disordered stretch occupies residues 1 to 21 (MAGLRPGAGVPPGTPWPISPG).

This sequence belongs to the UDP-glycosyltransferase family.

It catalyses the reaction dTDP-beta-L-mycarose + demethyllactenocin = demethylmacrocin + dTDP + H(+). Involved in the biosynthesis of mycarose which is a 6-deoxyhexose sugar required during production of the macrolide antibiotic tylosin. Catalyzes the transfer of L-mycarosyl from dTDP-beta-L-mycarose to demethyllactenocin to yield demethylmacrocin. This Streptomyces fradiae (Streptomyces roseoflavus) protein is Demethyllactenocin mycarosyltransferase (tylCV).